Reading from the N-terminus, the 458-residue chain is Carboxypeptidase N catalytic chain (458 aa).

The first 20 residues, methionine 1–proline 20, serve as a signal peptide directing secretion. Residues arginine 24–valine 338 enclose the Peptidase M14 domain. The cysteines at positions 42 and 104 are disulfide-linked. Histidine 86, glutamate 89, and histidine 216 together coordinate Zn(2+). A disulfide bridge connects residues cysteine 271 and cysteine 311. Residue glutamate 308 is the Proton donor/acceptor of the active site. O-linked (GalNAc...) threonine glycosylation is found at threonine 400, threonine 402, and threonine 409. The tract at residues serine 423–alanine 458 is disordered.

The protein belongs to the peptidase M14 family. Tetramer of two catalytic chains and two glycosylated inactive chains. Zn(2+) is required as a cofactor. Synthesized in the liver and secreted in plasma.

Its subcellular location is the secreted. The protein localises to the extracellular space. The enzyme catalyses Release of a C-terminal basic amino acid, preferentially lysine.. Protects the body from potent vasoactive and inflammatory peptides containing C-terminal Arg or Lys (such as kinins or anaphylatoxins) which are released into the circulation. The polypeptide is Carboxypeptidase N catalytic chain (CPN1) (Homo sapiens (Human)).